A 396-amino-acid chain; its full sequence is 1-deoxy-D-xylulose 5-phosphate reductoisomerase (396 aa).

Residues threonine 10, glycine 11, serine 12, isoleucine 13, and asparagine 123 each coordinate NADPH. Position 124 (lysine 124) interacts with 1-deoxy-D-xylulose 5-phosphate. Glutamate 125 lines the NADPH pocket. A Mn(2+)-binding site is contributed by aspartate 149. Positions 150, 151, 185, and 208 each coordinate 1-deoxy-D-xylulose 5-phosphate. Glutamate 151 contacts Mn(2+). Glycine 214 serves as a coordination point for NADPH. 1-deoxy-D-xylulose 5-phosphate-binding residues include serine 221, asparagine 226, lysine 227, and glutamate 230. Glutamate 230 is a binding site for Mn(2+).

Belongs to the DXR family. Mg(2+) serves as cofactor. The cofactor is Mn(2+).

It catalyses the reaction 2-C-methyl-D-erythritol 4-phosphate + NADP(+) = 1-deoxy-D-xylulose 5-phosphate + NADPH + H(+). The protein operates within isoprenoid biosynthesis; isopentenyl diphosphate biosynthesis via DXP pathway; isopentenyl diphosphate from 1-deoxy-D-xylulose 5-phosphate: step 1/6. Functionally, catalyzes the NADPH-dependent rearrangement and reduction of 1-deoxy-D-xylulose-5-phosphate (DXP) to 2-C-methyl-D-erythritol 4-phosphate (MEP). This is 1-deoxy-D-xylulose 5-phosphate reductoisomerase from Shewanella sp. (strain MR-7).